The sequence spans 504 residues: Nuclear hormone receptor family member nhr-80 (504 aa).

Residues 27–103 constitute a DNA-binding region (nuclear receptor); it reads STRCLICSAQ…NGMKPGGVQP (77 aa). 2 NR C4-type zinc fingers span residues 30 to 50 and 66 to 86; these read CLIC…CSAC and CITG…CRSC. Low complexity predominate over residues 177-192; that stretch reads SSSTSFSASTTTNYST. The disordered stretch occupies residues 177–199; the sequence is SSSTSFSASTTTNYSTPGPSPMA. The 253-residue stretch at 214 to 466 folds into the NR LBD domain; it reads EEMKLGERRR…KLVLQLLNLD (253 aa). The segment at 455 to 466 is AF-2; that stretch reads LDKLVLQLLNLD.

This sequence belongs to the nuclear hormone receptor family. In terms of assembly, interacts with nuclear hormone receptor nhr-49; the interaction is direct. In terms of tissue distribution, expressed in the intestine and in some head and tail neurons, as well as the ventral nerve cord.

It localises to the nucleus. In terms of biological role, transcription factor. Binds to regulatory elements and regulates transcription of target genes, including acyltransferase dgat-2. As part of a lysosome-to-nucleus retrograde lipid signaling pathway, acts as a direct nuclear receptor of oleoylethanolamide (OEA) and, acting in concert with nuclear hormone receptor nhr-49, activates the transcription of genes promoting longevity and mitochondrial beta-oxidation. Required to modulate expression of delta-9 fatty acid desaturases, thereby regulating lipid metabolism; in some contexts, acting in concert with nhr-49. Involved in modulation of lipid metabolism in response to the citrate-induced mitochondrial unfolded protein response (mtUPR), acting downstream of transcription factor dve-1 and ubiquitin-like protein 5. Plays a role in modulating mitochondrial morphology and function. Involved in positively modulating life-span in a germline-dependent manner, acting in concert with nuclear hormone receptor daf-12. Plays a role in transgenerational lipid accumulation in response to a high-fat diet. In Caenorhabditis elegans, this protein is Nuclear hormone receptor family member nhr-80.